The sequence spans 144 residues: Large ribosomal subunit protein uL11 (144 aa).

It belongs to the universal ribosomal protein uL11 family. In terms of assembly, part of the ribosomal stalk of the 50S ribosomal subunit. Interacts with L10 and the large rRNA to form the base of the stalk. L10 forms an elongated spine to which L12 dimers bind in a sequential fashion forming a multimeric L10(L12)X complex. In terms of processing, one or more lysine residues are methylated.

Functionally, forms part of the ribosomal stalk which helps the ribosome interact with GTP-bound translation factors. In Neisseria meningitidis serogroup C (strain 053442), this protein is Large ribosomal subunit protein uL11.